Here is a 125-residue protein sequence, read N- to C-terminus: Ribonuclease P protein component (125 aa).

Belongs to the RnpA family. In terms of assembly, consists of a catalytic RNA component (M1 or rnpB) and a protein subunit.

The catalysed reaction is Endonucleolytic cleavage of RNA, removing 5'-extranucleotides from tRNA precursor.. Its function is as follows. RNaseP catalyzes the removal of the 5'-leader sequence from pre-tRNA to produce the mature 5'-terminus. It can also cleave other RNA substrates such as 4.5S RNA. The protein component plays an auxiliary but essential role in vivo by binding to the 5'-leader sequence and broadening the substrate specificity of the ribozyme. This chain is Ribonuclease P protein component, found in Clostridium botulinum (strain Eklund 17B / Type B).